Here is an 856-residue protein sequence, read N- to C-terminus: DNA mismatch repair protein MutS (856 aa).

Glycine 605–serine 612 lines the ATP pocket.

Belongs to the DNA mismatch repair MutS family.

Its function is as follows. This protein is involved in the repair of mismatches in DNA. It is possible that it carries out the mismatch recognition step. This protein has a weak ATPase activity. This is DNA mismatch repair protein MutS from Lysinibacillus sphaericus (strain C3-41).